Reading from the N-terminus, the 188-residue chain is uncharacterized protein (188 aa).

Residues 62-77 carry the L5-specific motif motif; that stretch reads ITGEKPLIKLNESTEK.

It localises to the mitochondrion. This is an uncharacterized protein from Dictyostelium discoideum (Social amoeba).